The chain runs to 127 residues: Small ribosomal subunit protein uS8m (127 aa).

Belongs to the universal ribosomal protein uS8 family.

Its subcellular location is the mitochondrion. This is Small ribosomal subunit protein uS8m (RPS8) from Acanthamoeba castellanii (Amoeba).